The primary structure comprises 857 residues: RNA-directed RNA polymerase 2a (857 aa).

A RdRp catalytic domain is found at 511 to 624 (KHCLEIDLSK…FSLLPPVGDP (114 aa)). The disordered stretch occupies residues 782 to 829 (RRCNDKRRTPTGSYGGGEEAETKISQAESTGTRSQKSQRESAFKSQTV). A compositionally biased stretch (polar residues) spans 804 to 816 (KISQAESTGTRSQ).

It belongs to the ssRNA positive-strand viruses RNA-directed RNA polymerase family. In terms of assembly, interacts with replication protein 1a.

It carries out the reaction RNA(n) + a ribonucleoside 5'-triphosphate = RNA(n+1) + diphosphate. Its function is as follows. RNA-dependent RNA polymerase which replicates the viral genome composed of 3 RNA segments, RNA1, RNA2 and RNA3. This chain is RNA-directed RNA polymerase 2a, found in Cucumis sativus (Cucumber).